An 803-amino-acid chain; its full sequence is Translation initiation factor IF-2 (803 aa).

Disordered regions lie at residues 93 to 123 (TKPVVEQKRETEPAPTQEVPPTSDTTNLNEK) and 138 to 206 (EVKE…ASAK). Over residues 111–121 (VPPTSDTTNLN) the composition is skewed to polar residues. A compositionally biased stretch (basic and acidic residues) spans 138-155 (EVKEEAKKTPSEKKETPK). The span at 156 to 167 (KGPRKETRRSRK) shows a compositional bias: basic residues. The span at 168–188 (PDKEDKWEREELHMTKLVEER) shows a compositional bias: basic and acidic residues. The tr-type G domain maps to 302–471 (PRAPVVTIMG…LLQAEVLELK (170 aa)). The G1 stretch occupies residues 311-318 (GHVDHGKT). 311–318 (GHVDHGKT) lines the GTP pocket. Positions 336–340 (GITQH) are G2. Residues 357 to 360 (DTPG) form a G3 region. GTP-binding positions include 357–361 (DTPGH) and 411–414 (NKID). The tract at residues 411–414 (NKID) is G4. The G5 stretch occupies residues 447 to 449 (SAK).

The protein belongs to the TRAFAC class translation factor GTPase superfamily. Classic translation factor GTPase family. IF-2 subfamily.

Its subcellular location is the cytoplasm. One of the essential components for the initiation of protein synthesis. Protects formylmethionyl-tRNA from spontaneous hydrolysis and promotes its binding to the 30S ribosomal subunits. Also involved in the hydrolysis of GTP during the formation of the 70S ribosomal complex. In Coxiella burnetii (strain RSA 493 / Nine Mile phase I), this protein is Translation initiation factor IF-2.